A 199-amino-acid chain; its full sequence is Octanoyltransferase (199 aa).

One can recognise a BPL/LPL catalytic domain in the interval 27 to 199; sequence SNSYDELWLL…FVQYFLTQFK (173 aa). Substrate-binding positions include 66–73, 133–135, and 146–148; these read RGGQVTYH, SIG, and GIA. C164 acts as the Acyl-thioester intermediate in catalysis.

This sequence belongs to the LipB family.

Its subcellular location is the cytoplasm. It carries out the reaction octanoyl-[ACP] + L-lysyl-[protein] = N(6)-octanoyl-L-lysyl-[protein] + holo-[ACP] + H(+). It functions in the pathway protein modification; protein lipoylation via endogenous pathway; protein N(6)-(lipoyl)lysine from octanoyl-[acyl-carrier-protein]: step 1/2. Its function is as follows. Catalyzes the transfer of endogenously produced octanoic acid from octanoyl-acyl-carrier-protein onto the lipoyl domains of lipoate-dependent enzymes. Lipoyl-ACP can also act as a substrate although octanoyl-ACP is likely to be the physiological substrate. This Legionella pneumophila (strain Lens) protein is Octanoyltransferase.